The following is a 374-amino-acid chain: Cobalt-precorrin-5B C(1)-methyltransferase (374 aa).

The protein belongs to the CbiD family.

It catalyses the reaction Co-precorrin-5B + S-adenosyl-L-methionine = Co-precorrin-6A + S-adenosyl-L-homocysteine. It participates in cofactor biosynthesis; adenosylcobalamin biosynthesis; cob(II)yrinate a,c-diamide from sirohydrochlorin (anaerobic route): step 6/10. Functionally, catalyzes the methylation of C-1 in cobalt-precorrin-5B to form cobalt-precorrin-6A. The chain is Cobalt-precorrin-5B C(1)-methyltransferase from Synechococcus elongatus (strain ATCC 33912 / PCC 7942 / FACHB-805) (Anacystis nidulans R2).